The following is a 473-amino-acid chain: Lactate utilization protein B (473 aa).

2 consecutive 4Fe-4S ferredoxin-type domains span residues 302–332 and 351–380; these read GSEF…GHSY and YDDY…LHDL. [4Fe-4S] cluster contacts are provided by Cys311, Cys314, Cys317, Cys321, Cys364, Cys367, and Cys371.

Belongs to the LutB/YkgF family.

In terms of biological role, is involved in L-lactate degradation and allows cells to grow with lactate as the sole carbon source. Has probably a role as an electron transporter during oxidation of L-lactate. In Bacillus cereus (strain G9842), this protein is Lactate utilization protein B.